The chain runs to 21 residues: Basic phospholipase A2 BjIV (21 aa).

The protein belongs to the phospholipase A2 family. Group II subfamily. In terms of assembly, can form dimers, trimers and tetramers. The cofactor is Ca(2+). Contains seven disulfide bonds. In terms of tissue distribution, expressed by the venom gland.

The protein localises to the secreted. It catalyses the reaction a 1,2-diacyl-sn-glycero-3-phosphocholine + H2O = a 1-acyl-sn-glycero-3-phosphocholine + a fatty acid + H(+). Inhibited by crotapotin. In terms of biological role, snake venom phospholipase A2 has a high enzymatic activity and produces moderate myonecrosis in skeletal muscle, but shows no neuromuscular activity in mouse phrenic nerve-diaphragm preparations. PLA2 catalyzes the calcium-dependent hydrolysis of the 2-acyl groups in 3-sn-phosphoglycerides. In Bothrops jararacussu (Jararacussu), this protein is Basic phospholipase A2 BjIV.